Consider the following 444-residue polypeptide: RING finger and transmembrane domain-containing protein 2 (444 aa).

Topologically, residues 1–181 (MWLFTVNQVL…ILLAKLCFQH (181 aa)) are extracellular. 2 disordered regions span residues 13 to 41 (MQRR…ASVD) and 92 to 149 (PASR…PGTP). Basic residues predominate over residues 107-121 (YHHRQPHHHFHHGGH). The segment covering 131–140 (GGDHRGHSEE) has biased composition (basic and acidic residues). The chain crosses the membrane as a helical span at residues 182 to 202 (KLGIAVCIGMASTFAYANSTL). The Cytoplasmic segment spans residues 203 to 214 (REQVSLKEKRSV). The helical transmembrane segment at 215–235 (LVILWILAFLAGNTLYVLYTF) threads the bilayer. Residues 236-255 (SSQQLYNSLIFLKPNLETLD) lie on the Extracellular side of the membrane. A helical membrane pass occupies residues 256–276 (FFDLLWIVGIADFVLKYITIA). The Cytoplasmic segment spans residues 277–329 (LKCLIVALPKIILAVKSKGKFYLVIEELSQLFRSLVPIQLWYKYIMGDDSSNS). Residues 330 to 350 (YFLGGVLIVLYSLCKSFDICG) form a helical membrane-spanning segment. Over 351 to 444 (RVGGVRKALK…GATSAHFQVY (94 aa)) the chain is Extracellular. The RING-type; degenerate zinc finger occupies 384–422 (CAICQAEFREPLILLCQHVFCEECLCLWLDRERTCPLSR).

The protein resides in the membrane. Its function is as follows. E3 ubiquitin-protein ligase that negatively regulates IL3-dependent cellular responses through IL3RA ubiquitination and degradation by the proteasome, having an anti-inflammatory effect. This Pongo abelii (Sumatran orangutan) protein is RING finger and transmembrane domain-containing protein 2 (RNFT2).